Here is a 202-residue protein sequence, read N- to C-terminus: dTTP/UTP pyrophosphatase (202 aa).

Asp71 serves as the catalytic Proton acceptor.

Belongs to the Maf family. YhdE subfamily. A divalent metal cation serves as cofactor.

It localises to the cytoplasm. The enzyme catalyses dTTP + H2O = dTMP + diphosphate + H(+). The catalysed reaction is UTP + H2O = UMP + diphosphate + H(+). In terms of biological role, nucleoside triphosphate pyrophosphatase that hydrolyzes dTTP and UTP. May have a dual role in cell division arrest and in preventing the incorporation of modified nucleotides into cellular nucleic acids. This chain is dTTP/UTP pyrophosphatase, found in Zymomonas mobilis subsp. mobilis (strain ATCC 31821 / ZM4 / CP4).